We begin with the raw amino-acid sequence, 128 residues long: Prefoldin subunit 1 (128 aa).

2 coiled-coil regions span residues 17–37 and 81–115; these read MIELTGKLKQVQNQMRNKEGD and LKDSEAAVASLQTSKEYLEKQVAEVENNLRELLQQ.

Belongs to the prefoldin subunit beta family. As to quaternary structure, heterohexamer of two PFD-alpha type and four PFD-beta type subunits forming prefoldin co-chaperone complex. Interacts with LSM8, a specific subunit of the LSM2-8 complex, which is a core component of the spliceosome.

Its subcellular location is the cytoplasm. It is found in the nucleus. Binds specifically to cytosolic chaperonin (c-CPN) and transfers target proteins to it. Binds to nascent polypeptide chain and promotes folding in an environment in which there are many competing pathways for nonnative proteins. Together with other chaperonins, contribute to the regulation of gene expression by modulating the spliceosome function on pre-mRNA splicing post-transcriptionally by acting as a co-chaperone of Hsp90 to control levels of LSM8. Required for microtubules (MTs) organization and dynamicity. Involved in the process leading to microtubules dissociation in response to gibberellic acid (GA) probably due to the DELLA proteins-mediated translocation of the prefoldin co-chaperone complex from the cytoplasm to the nucleus. In Arabidopsis thaliana (Mouse-ear cress), this protein is Prefoldin subunit 1.